The chain runs to 396 residues: S-adenosylmethionine synthase 3 (396 aa).

Glu-13 provides a ligand contact to Mg(2+). His-19 is an ATP binding site. A K(+)-binding site is contributed by Glu-47. Residues Glu-60 and Gln-103 each coordinate L-methionine. Residues 171-173, 239-242, Asp-250, 256-257, Ala-273, Lys-277, and Lys-281 contribute to the ATP site; these read DGK, SGRF, and RK. Position 250 (Asp-250) interacts with L-methionine. Residue Lys-281 coordinates L-methionine.

The protein belongs to the AdoMet synthase family. In terms of assembly, homotetramer. Mn(2+) serves as cofactor. Mg(2+) is required as a cofactor. The cofactor is Co(2+). Requires K(+) as cofactor. Expressed in roots, stems and leaves (at protein level).

The protein resides in the cytoplasm. The enzyme catalyses L-methionine + ATP + H2O = S-adenosyl-L-methionine + phosphate + diphosphate. The protein operates within amino-acid biosynthesis; S-adenosyl-L-methionine biosynthesis; S-adenosyl-L-methionine from L-methionine: step 1/1. Functionally, catalyzes the formation of S-adenosylmethionine from methionine and ATP. The reaction comprises two steps that are both catalyzed by the same enzyme: formation of S-adenosylmethionine (AdoMet) and triphosphate, and subsequent hydrolysis of the triphosphate. May be involved in the synthesis of betain in response to abiotic stress such as high salinity. This Atriplex nummularia (Old man saltbush) protein is S-adenosylmethionine synthase 3 (SAMS3).